A 433-amino-acid polypeptide reads, in one-letter code: Xylose isomerase (433 aa).

Catalysis depends on residues His97 and Asp100. The Mg(2+) site is built by Glu228, Glu264, His267, Asp292, Asp303, Asp305, and Asp334.

It belongs to the xylose isomerase family. As to quaternary structure, homotetramer. Mg(2+) serves as cofactor.

The protein resides in the cytoplasm. The enzyme catalyses alpha-D-xylose = alpha-D-xylulofuranose. This is Xylose isomerase from Fervidobacterium gondwanense.